The following is a 956-amino-acid chain: Calsyntenin-3 (956 aa).

Positions Met-1–Gly-20 are cleaved as a signal peptide. Residues Asn-21 to Ala-850 lie on the Extracellular side of the membrane. 2 consecutive Cadherin domains span residues Ile-30–Phe-151 and Val-152–Phe-271. Asn-333, Asn-353, Asn-513, and Asn-743 each carry an N-linked (GlcNAc...) asparagine glycan. Residues Ala-851–Phe-871 traverse the membrane as a helical segment. At Arg-872–Tyr-956 the chain is on the cytoplasmic side. Residues Gly-921–Ser-937 show a composition bias toward acidic residues. The segment at Gly-921–Tyr-956 is disordered. Over residues Asp-938–Tyr-956 the composition is skewed to basic and acidic residues.

It belongs to the calsyntenin family. Homooligomer and heterooligomer; mediates both homophilic and heterophilc interactions with clstn1 and clstn2 paralogs via cadherin domains. Interacts (via cadherin domains) with both alpha and beta isoforms of neurexins. As to expression, by 48 hours post-fertilization (hpf), widely expressed in the brain, with strong expression in the telencephalon and the midbrain. Not expressed in the optic tectum.

The protein localises to the postsynaptic cell membrane. It localises to the endoplasmic reticulum membrane. The protein resides in the golgi apparatus membrane. Its function is as follows. Synaptic adhesion molecule. Promotes synapse development by acting as a cell adhesion molecule at the postsynaptic membrane, which associates with presynaptic neurexins. The chain is Calsyntenin-3 from Danio rerio (Zebrafish).